A 210-amino-acid polypeptide reads, in one-letter code: Pyridoxine/pyridoxamine 5'-phosphate oxidase (210 aa).

Residues 7-10 (RQSY) and Lys-65 each bind substrate. Residues 60–65 (RIVLIK), 75–76 (YT), Arg-81, Lys-82, and Gln-104 contribute to the FMN site. Residues Tyr-122, Arg-126, and Ser-130 each coordinate substrate. FMN contacts are provided by residues 139-140 (QS) and Trp-182. 188–190 (RLH) provides a ligand contact to substrate. Arg-192 serves as a coordination point for FMN.

Belongs to the pyridoxamine 5'-phosphate oxidase family. Homodimer. It depends on FMN as a cofactor.

It catalyses the reaction pyridoxamine 5'-phosphate + O2 + H2O = pyridoxal 5'-phosphate + H2O2 + NH4(+). The enzyme catalyses pyridoxine 5'-phosphate + O2 = pyridoxal 5'-phosphate + H2O2. The protein operates within cofactor metabolism; pyridoxal 5'-phosphate salvage; pyridoxal 5'-phosphate from pyridoxamine 5'-phosphate: step 1/1. It participates in cofactor metabolism; pyridoxal 5'-phosphate salvage; pyridoxal 5'-phosphate from pyridoxine 5'-phosphate: step 1/1. Catalyzes the oxidation of either pyridoxine 5'-phosphate (PNP) or pyridoxamine 5'-phosphate (PMP) into pyridoxal 5'-phosphate (PLP). The sequence is that of Pyridoxine/pyridoxamine 5'-phosphate oxidase from Bordetella petrii (strain ATCC BAA-461 / DSM 12804 / CCUG 43448).